The following is a 281-amino-acid chain: Phosphatidylglycerol--prolipoprotein diacylglyceryl transferase (281 aa).

4 helical membrane passes run Val-23 to Trp-43, Phe-71 to Tyr-91, Trp-107 to Phe-127, and Ile-133 to Val-153. Arg-154 is an a 1,2-diacyl-sn-glycero-3-phospho-(1'-sn-glycerol) binding site. The next 3 helical transmembrane spans lie at Leu-189–Val-209, Gly-217–Phe-237, and Leu-247–Leu-267.

Belongs to the Lgt family.

The protein resides in the cell inner membrane. The catalysed reaction is L-cysteinyl-[prolipoprotein] + a 1,2-diacyl-sn-glycero-3-phospho-(1'-sn-glycerol) = an S-1,2-diacyl-sn-glyceryl-L-cysteinyl-[prolipoprotein] + sn-glycerol 1-phosphate + H(+). Its pathway is protein modification; lipoprotein biosynthesis (diacylglyceryl transfer). In terms of biological role, catalyzes the transfer of the diacylglyceryl group from phosphatidylglycerol to the sulfhydryl group of the N-terminal cysteine of a prolipoprotein, the first step in the formation of mature lipoproteins. This chain is Phosphatidylglycerol--prolipoprotein diacylglyceryl transferase, found in Brucella anthropi (strain ATCC 49188 / DSM 6882 / CCUG 24695 / JCM 21032 / LMG 3331 / NBRC 15819 / NCTC 12168 / Alc 37) (Ochrobactrum anthropi).